We begin with the raw amino-acid sequence, 429 residues long: Enolase (429 aa).

Gln-163 contributes to the (2R)-2-phosphoglycerate binding site. Residue Glu-205 is the Proton donor of the active site. Residues Asp-242, Glu-286, and Asp-313 each coordinate Mg(2+). 4 residues coordinate (2R)-2-phosphoglycerate: Lys-338, Arg-367, Ser-368, and Lys-389. The active-site Proton acceptor is Lys-338.

The protein belongs to the enolase family. It depends on Mg(2+) as a cofactor.

It localises to the cytoplasm. The protein localises to the secreted. The protein resides in the cell surface. It carries out the reaction (2R)-2-phosphoglycerate = phosphoenolpyruvate + H2O. Its pathway is carbohydrate degradation; glycolysis; pyruvate from D-glyceraldehyde 3-phosphate: step 4/5. Its function is as follows. Catalyzes the reversible conversion of 2-phosphoglycerate (2-PG) into phosphoenolpyruvate (PEP). It is essential for the degradation of carbohydrates via glycolysis. In Geotalea uraniireducens (strain Rf4) (Geobacter uraniireducens), this protein is Enolase.